We begin with the raw amino-acid sequence, 165 residues long: UPF0303 protein Bcenmc03_1534 (165 aa).

It belongs to the UPF0303 family.

This is UPF0303 protein Bcenmc03_1534 from Burkholderia orbicola (strain MC0-3).